We begin with the raw amino-acid sequence, 75 residues long: Brevinin-2SN2 (75 aa).

An N-terminal signal peptide occupies residues 1-22 (MFTLKKPLLFLFFLGTISLSFC). Residues 23 to 40 (EEERGADEDDGGEMTEEE) constitute a propeptide, removed in mature form. An intrachain disulfide couples cysteine 69 to cysteine 75.

It belongs to the frog skin active peptide (FSAP) family. Brevinin subfamily. In terms of tissue distribution, expressed by the skin glands.

The protein localises to the secreted. Functionally, antimicrobial peptide. Active against some Gram-negative and a variety of Gram-positive bacterial strains. Active against fungus C.glabrata 090902 but not against C.albicans ATCC 10231. Shows hemolytic activity against human erythrocytes. The polypeptide is Brevinin-2SN2 (Sylvirana spinulosa (Fine-spined frog)).